The sequence spans 935 residues: Protocadherin gamma-A11 (935 aa).

An N-terminal signal peptide occupies residues 1 to 29 (MANRLQRGDRSRLLLLLCIFLGTLRGFRA). Cadherin domains are found at residues 30 to 134 (RQIR…APSF), 135 to 243 (QEDE…IPMF), 244 to 348 (TQSV…APEI), 349 to 453 (TITS…PPVF), 454 to 563 (PHSS…APEI), and 571 to 677 (DGST…ADLG). Over 30-693 (RQIRYSVPEE…NSEASDLSLY (664 aa)) the chain is Extracellular. Residue N48 is glycosylated (N-linked (GlcNAc...) asparagine). 4 N-linked (GlcNAc...) asparagine glycosylation sites follow: N255, N266, N420, and N546. A helical transmembrane segment spans residues 694-714 (LVVAVAAVSCIFLVFVIVLLA). Topologically, residues 715-935 (LRLWRWHKSR…KKKSGKKEKK (221 aa)) are cytoplasmic. Disordered regions lie at residues 805 to 844 (CDPT…WPNN) and 905 to 935 (ATLT…KEKK). Over residues 807–844 (PTSNQQAPPNTDWRFSQAQRPGTSGSQNGDDTGTWPNN) the composition is skewed to polar residues. Residues 925–935 (NKKKSGKKEKK) are compositionally biased toward basic residues.

The protein resides in the cell membrane. Functionally, potential calcium-dependent cell-adhesion protein. May be involved in the establishment and maintenance of specific neuronal connections in the brain. This chain is Protocadherin gamma-A11 (PCDHGA11), found in Pan troglodytes (Chimpanzee).